We begin with the raw amino-acid sequence, 463 residues long: Glycogen synthase (463 aa).

Lys15 is an ADP-alpha-D-glucose binding site.

It belongs to the glycosyltransferase 1 family. Bacterial/plant glycogen synthase subfamily.

The enzyme catalyses [(1-&gt;4)-alpha-D-glucosyl](n) + ADP-alpha-D-glucose = [(1-&gt;4)-alpha-D-glucosyl](n+1) + ADP + H(+). It participates in glycan biosynthesis; glycogen biosynthesis. Functionally, synthesizes alpha-1,4-glucan chains using ADP-glucose. The polypeptide is Glycogen synthase (Aquifex aeolicus (strain VF5)).